Here is a 353-residue protein sequence, read N- to C-terminus: Photosystem II D2 protein (353 aa).

Residue T2 is modified to N-acetylthreonine. Position 2 is a phosphothreonine (T2). A helical membrane pass occupies residues 41–61 (CAYFAIGGWFTGTTFVTSWYT). H118 is a binding site for chlorophyll a. The helical transmembrane segment at 125 to 141 (GFMLRQFELARSVQLRP) threads the bilayer. Pheophytin a is bound by residues Q130 and N143. A helical transmembrane segment spans residues 153–166 (VFVSVFLIYPLGQS). A chlorophyll a-binding site is contributed by H198. Residues 208-228 (AALLCAIHGATVENTLFEDGD) form a helical membrane-spanning segment. A plastoquinone-binding residues include H215 and F262. H215 lines the Fe cation pocket. H269 serves as a coordination point for Fe cation. The helical transmembrane segment at 279 to 295 (GLWMSALGVVGLALNLR) threads the bilayer.

It belongs to the reaction center PufL/M/PsbA/D family. In terms of assembly, PSII is composed of 1 copy each of membrane proteins PsbA, PsbB, PsbC, PsbD, PsbE, PsbF, PsbH, PsbI, PsbJ, PsbK, PsbL, PsbM, PsbT, PsbX, PsbY, PsbZ, Psb30/Ycf12, at least 3 peripheral proteins of the oxygen-evolving complex and a large number of cofactors. It forms dimeric complexes. The D1/D2 heterodimer binds P680, chlorophylls that are the primary electron donor of PSII, and subsequent electron acceptors. It shares a non-heme iron and each subunit binds pheophytin, quinone, additional chlorophylls, carotenoids and lipids. There is also a Cl(-1) ion associated with D1 and D2, which is required for oxygen evolution. The PSII complex binds additional chlorophylls, carotenoids and specific lipids. serves as cofactor.

It is found in the plastid. The protein localises to the chloroplast thylakoid membrane. It catalyses the reaction 2 a plastoquinone + 4 hnu + 2 H2O = 2 a plastoquinol + O2. Photosystem II (PSII) is a light-driven water:plastoquinone oxidoreductase that uses light energy to abstract electrons from H(2)O, generating O(2) and a proton gradient subsequently used for ATP formation. It consists of a core antenna complex that captures photons, and an electron transfer chain that converts photonic excitation into a charge separation. The D1/D2 (PsbA/PsbD) reaction center heterodimer binds P680, the primary electron donor of PSII as well as several subsequent electron acceptors. D2 is needed for assembly of a stable PSII complex. This Carica papaya (Papaya) protein is Photosystem II D2 protein.